Reading from the N-terminus, the 201-residue chain is Small ribosomal subunit protein uS4c (201 aa).

Residues 20 to 44 are disordered; that stretch reads GLTSKRPKAGSDLRNQSRSGKKSQY. Residues 89–152 form the S4 RNA-binding domain; that stretch reads MRLDNILFRL…NSRTLVQNLL (64 aa).

It belongs to the universal ribosomal protein uS4 family. Part of the 30S ribosomal subunit. Contacts protein S5. The interaction surface between S4 and S5 is involved in control of translational fidelity.

Its subcellular location is the plastid. The protein resides in the chloroplast. One of the primary rRNA binding proteins, it binds directly to 16S rRNA where it nucleates assembly of the body of the 30S subunit. In terms of biological role, with S5 and S12 plays an important role in translational accuracy. The protein is Small ribosomal subunit protein uS4c (rps4) of Barbarea verna (Land cress).